We begin with the raw amino-acid sequence, 374 residues long: Putative F-box protein At3g17480 (374 aa).

An F-box domain is found at 6-52 (SSPMSVLTEDLVEDILSRVPATSLVRLRSTCKQWNAILNDRRFIKKH).

The chain is Putative F-box protein At3g17480 from Arabidopsis thaliana (Mouse-ear cress).